The sequence spans 175 residues: Alpha-crystallin B chain (175 aa).

Met1 carries the N-acetylmethionine modification. Phosphoserine is present on residues Ser19, Ser45, and Ser59. One can recognise a sHSP domain in the interval 56–164; the sequence is RAPSWIDTGL…PERTIPITRE (109 aa). Zn(2+) is bound at residue His83. The residue at position 92 (Lys92) is an N6-acetyllysine. Residues His104, Glu106, His111, and His119 each coordinate Zn(2+). Residues 145-175 are disordered; that stretch reads VNGPRKQVSGPERTIPITREEKPAVAAAPKK. Lys166 is modified (N6-acetyllysine).

The protein belongs to the small heat shock protein (HSP20) family. As to quaternary structure, heteromer composed of three CRYAA and one CRYAB subunits. Aggregates with homologous proteins, including the small heat shock protein HSPB1, to form large heteromeric complexes. Inter-subunit bridging via zinc ions enhances stability, which is crucial as there is no protein turn over in the lens. Interacts with HSPBAP1. Interacts with TTN/titin. Interacts with TMEM109; in the cellular response to DNA damage. Interacts with DES; binds rapidly during early stages of DES filament assembly and a reduced binding seen in the later stages. Interacts with TMED10; the interaction mediates the translocation from the cytoplasm into the ERGIC (endoplasmic reticulum-Golgi intermediate compartment) and thereby secretion. Interacts with ATP6V1A and with MTOR, forming a ternary complex. As to expression, abundantly expressed in the lens of the eye. Expressed in ventricular cardiomyocytes of the heart. Also expressed in skeletal muscle and the kidney.

The protein localises to the cytoplasm. Its subcellular location is the cytosol. It localises to the nucleus. The protein resides in the secreted. It is found in the lysosome. May contribute to the transparency and refractive index of the lens. Has chaperone-like activity, preventing aggregation of various proteins under a wide range of stress conditions. In lens epithelial cells, stabilizes the ATP6V1A protein, preventing its degradation by the proteasome. In Mus musculus (Mouse), this protein is Alpha-crystallin B chain.